The sequence spans 425 residues: Dihydroorotase (425 aa).

Zn(2+) is bound by residues His-56 and His-58. Substrate contacts are provided by residues 58–60 (HYR) and Asn-90. Zn(2+) is bound by residues Asp-148, His-175, and His-228. A substrate-binding site is contributed by Asn-274. Position 301 (Asp-301) interacts with Zn(2+). Asp-301 is a catalytic residue. Residues His-305 and 319-320 (FG) contribute to the substrate site.

It belongs to the metallo-dependent hydrolases superfamily. DHOase family. Class I DHOase subfamily. It depends on Zn(2+) as a cofactor.

The enzyme catalyses (S)-dihydroorotate + H2O = N-carbamoyl-L-aspartate + H(+). The protein operates within pyrimidine metabolism; UMP biosynthesis via de novo pathway; (S)-dihydroorotate from bicarbonate: step 3/3. Functionally, catalyzes the reversible cyclization of carbamoyl aspartate to dihydroorotate. This chain is Dihydroorotase, found in Lactobacillus delbrueckii subsp. bulgaricus (strain ATCC 11842 / DSM 20081 / BCRC 10696 / JCM 1002 / NBRC 13953 / NCIMB 11778 / NCTC 12712 / WDCM 00102 / Lb 14).